We begin with the raw amino-acid sequence, 212 residues long: Ribonuclease HII (212 aa).

The RNase H type-2 domain maps to 1–206 (MILVGIDEAG…LQDIAPNYYI (206 aa)). Positions 7, 8, and 104 each coordinate a divalent metal cation.

The protein belongs to the RNase HII family. It depends on Mn(2+) as a cofactor. Mg(2+) serves as cofactor.

The protein resides in the cytoplasm. The catalysed reaction is Endonucleolytic cleavage to 5'-phosphomonoester.. Its function is as follows. Endonuclease that specifically degrades the RNA of RNA-DNA hybrids. This is Ribonuclease HII from Sulfolobus acidocaldarius (strain ATCC 33909 / DSM 639 / JCM 8929 / NBRC 15157 / NCIMB 11770).